The chain runs to 541 residues: Metal transporter Nramp6 (541 aa).

Residues 1-18 (MAPLPAAATATASSAATP) are compositionally biased toward low complexity. Residues 1-44 (MAPLPAAATATASSAATPADDEAHSLLPSTPSNEEDDDDLEERA) form a disordered region. 12 helical membrane passes run 87-107 (LWLF…PGNL), 120-140 (TLLW…LLAA), 172-192 (VAMV…IKIL), 196-216 (FLPL…FLSL), 224-244 (LEAV…WMFT), 270-290 (AVGV…SALV), 316-336 (IALA…AKGF), 358-378 (FGGG…AAGQ), 404-424 (IRSL…ALFF), 436-456 (WLNV…ITLV), 474-494 (VTWT…LDFF), and 502-522 (LSGS…LYLI).

The protein belongs to the NRAMP (TC 2.A.55) family.

The protein localises to the membrane. In terms of biological role, probable metal transporter. This chain is Metal transporter Nramp6 (NRAMP6), found in Oryza sativa subsp. japonica (Rice).